The sequence spans 466 residues: ATP synthase subunit beta (466 aa).

Residue 152–159 (GGAGVGKT) participates in ATP binding.

This sequence belongs to the ATPase alpha/beta chains family. As to quaternary structure, F-type ATPases have 2 components, CF(1) - the catalytic core - and CF(0) - the membrane proton channel. CF(1) has five subunits: alpha(3), beta(3), gamma(1), delta(1), epsilon(1). CF(0) has three main subunits: a(1), b(2) and c(9-12). The alpha and beta chains form an alternating ring which encloses part of the gamma chain. CF(1) is attached to CF(0) by a central stalk formed by the gamma and epsilon chains, while a peripheral stalk is formed by the delta and b chains.

It localises to the cell inner membrane. The enzyme catalyses ATP + H2O + 4 H(+)(in) = ADP + phosphate + 5 H(+)(out). Its function is as follows. Produces ATP from ADP in the presence of a proton gradient across the membrane. The catalytic sites are hosted primarily by the beta subunits. The polypeptide is ATP synthase subunit beta (Sulfurovum sp. (strain NBC37-1)).